Reading from the N-terminus, the 321-residue chain is Mas-related G-protein coupled receptor member D (321 aa).

The Extracellular portion of the chain corresponds to 1–33 (MNQTLNSSGTVESALNYSRGSTVHTAYLVLSSL). N-linked (GlcNAc...) asparagine glycosylation is found at asparagine 2, asparagine 6, and asparagine 16. A helical transmembrane segment spans residues 34–54 (AMFTCLCGMAGNSMVIWLLGF). At 55 to 59 (RMHRN) the chain is on the cytoplasmic side. A helical membrane pass occupies residues 60–80 (PFCIYILNLAAADLLFLFSMA). Topologically, residues 81–112 (STLSLETQPLVNTTDKVHELMKRLMYFAYTVG) are extracellular. Residue asparagine 92 is glycosylated (N-linked (GlcNAc...) asparagine). The helical transmembrane segment at 113–133 (LSLLTAISTQRCLSVLFPIWF) threads the bilayer. Topologically, residues 134–142 (KCHRPRHLS) are cytoplasmic. Residues 143 to 163 (AWVCGLLWTLCLLMNGLTSSF) traverse the membrane as a helical segment. Residues 164 to 184 (CSKFLKFNEDRCFRVDMVQAA) lie on the Extracellular side of the membrane. Residues 185–205 (LIMGVLTPVMTLSSLTLFVWV) traverse the membrane as a helical segment. Over 206 to 218 (RRSSQQWRRQPTR) the chain is Cytoplasmic. A helical membrane pass occupies residues 219 to 239 (LFVVVLASVLVFLICSLPLSI). At 240-257 (YWFVLYWLSLPPEMQVLC) the chain is on the extracellular side. Residues 258-280 (FSLSRLSSSVSSSANPVIYFLVG) traverse the membrane as a helical segment. Over 281-321 (SRRSHRLPTRSLGTVLQQALREEPELEGGETPTVGTNEMGA) the chain is Cytoplasmic. Residues 302–321 (EEPELEGGETPTVGTNEMGA) form a disordered region.

This sequence belongs to the G-protein coupled receptor 1 family. Mas subfamily.

It is found in the cell membrane. Functionally, may regulate nociceptor function and/or development, including the sensation or modulation of pain. Functions as a specific membrane receptor for beta-alanine. Beta-alanine at micromolar doses specifically evoked Ca(2+) influx in cells expressing the receptor. Beta-alanine decreases forskolin-stimulated cAMP production in cells expressing the receptor, suggesting that the receptor couples with G-protein G(q) and G(i). This is Mas-related G-protein coupled receptor member D (MRGPRD) from Homo sapiens (Human).